We begin with the raw amino-acid sequence, 225 residues long: Cardiotrophin-like cytokine factor 1 (225 aa).

The first 27 residues, 1 to 27 (MDLRAGDSWGMLACLCTVLWHLPAVPA), serve as a signal peptide directing secretion. N-linked (GlcNAc...) asparagine glycosylation is present at Asn-29.

It belongs to the IL-6 superfamily. Forms a heteromeric complex with cardiotrophin-like cytokine CRLF1/CLF-1; the CRLF1-CLCF1 complex is a ligand for the ciliary neurotrophic factor receptor/CNTFR. The CRLF1-CLCF1 heterodimer binds SORL1 (via N-terminal ectodomain); within this complex, the interaction is mediated predominantly by the CRLF1 moiety. The tripartite signaling complex formed by CRLF1, CLCF1 and CNTFR also binds SORL1. As to expression, expressed predominantly in lymph nodes, spleen, peripheral blood lymphocytes, bone marrow, and fetal liver.

Its subcellular location is the secreted. Functionally, in complex with CRLF1, forms a heterodimeric neurotropic cytokine that plays a crucial role during neuronal development. Also stimulates B-cells. Binds to and activates the ILST/gp130 receptor. In Homo sapiens (Human), this protein is Cardiotrophin-like cytokine factor 1 (CLCF1).